The following is a 265-amino-acid chain: Type III pantothenate kinase (265 aa).

An ATP-binding site is contributed by 6–13 (DVGNTHTV). 112-115 (GADR) serves as a coordination point for substrate. D114 serves as the catalytic Proton acceptor. D134 serves as a coordination point for K(+). An ATP-binding site is contributed by T137. Residue T189 coordinates substrate.

The protein belongs to the type III pantothenate kinase family. Homodimer. The cofactor is NH4(+). K(+) is required as a cofactor.

The protein resides in the cytoplasm. It catalyses the reaction (R)-pantothenate + ATP = (R)-4'-phosphopantothenate + ADP + H(+). The protein operates within cofactor biosynthesis; coenzyme A biosynthesis; CoA from (R)-pantothenate: step 1/5. Catalyzes the phosphorylation of pantothenate (Pan), the first step in CoA biosynthesis. The sequence is that of Type III pantothenate kinase from Streptomyces coelicolor (strain ATCC BAA-471 / A3(2) / M145).